The following is a 349-amino-acid chain: 5-deoxyribose 1-phosphate isomerase (349 aa).

Substrate-binding positions include 49–51, Arg92, and Gln199; that span reads RGA. Asp240 functions as the Proton donor in the catalytic mechanism. 250-251 is a substrate binding site; that stretch reads NK.

Belongs to the EIF-2B alpha/beta/delta subunits family. DrdI subfamily.

It carries out the reaction 5-deoxy-alpha-D-ribose 1-phosphate = 5-deoxy-D-ribulose 1-phosphate. The protein operates within carbohydrate degradation. Catalyzes the isomerization of 5-deoxy-alpha-D-ribose 1-phosphate to 5-deoxy-D-ribulose 1-phosphate, as part of a 5-deoxyribose salvage pathway that recycles this toxic radical SAM enzyme by-product to mainstream metabolites. In Clostridium botulinum (strain 657 / Type Ba4), this protein is 5-deoxyribose 1-phosphate isomerase.